Reading from the N-terminus, the 434-residue chain is 3-phosphoshikimate 1-carboxyvinyltransferase (434 aa).

The 3-phosphoshikimate site is built by K22, S23, and R27. Residue K22 coordinates phosphoenolpyruvate. The phosphoenolpyruvate site is built by G93 and R121. S168, S169, Q170, S199, D320, and K347 together coordinate 3-phosphoshikimate. Q170 lines the phosphoenolpyruvate pocket. Catalysis depends on D320, which acts as the Proton acceptor. Phosphoenolpyruvate-binding residues include R351, R394, and K419.

Belongs to the EPSP synthase family. As to quaternary structure, monomer.

Its subcellular location is the cytoplasm. The enzyme catalyses 3-phosphoshikimate + phosphoenolpyruvate = 5-O-(1-carboxyvinyl)-3-phosphoshikimate + phosphate. Its pathway is metabolic intermediate biosynthesis; chorismate biosynthesis; chorismate from D-erythrose 4-phosphate and phosphoenolpyruvate: step 6/7. Functionally, catalyzes the transfer of the enolpyruvyl moiety of phosphoenolpyruvate (PEP) to the 5-hydroxyl of shikimate-3-phosphate (S3P) to produce enolpyruvyl shikimate-3-phosphate and inorganic phosphate. This Burkholderia lata (strain ATCC 17760 / DSM 23089 / LMG 22485 / NCIMB 9086 / R18194 / 383) protein is 3-phosphoshikimate 1-carboxyvinyltransferase.